The following is a 480-amino-acid chain: Krueppel-like factor 10 (480 aa).

The span at methionine 1–serine 12 shows a compositional bias: polar residues. Disordered stretches follow at residues methionine 1–lysine 32, valine 64–leucine 83, and proline 97–leucine 146. Positions glycine 14–lysine 32 are enriched in basic and acidic residues. At serine 183 the chain carries Phosphoserine. Residues alanine 202–lysine 222 are disordered. At serine 249 the chain carries Phosphoserine. 3 consecutive C2H2-type zinc fingers follow at residues histidine 369–histidine 393, phenylalanine 399–histidine 423, and phenylalanine 429–histidine 451.

This sequence belongs to the Sp1 C2H2-type zinc-finger protein family. Post-translationally, ubiquitinated; mediated by SIAH1 and leading to its subsequent proteasomal degradation.

The protein resides in the nucleus. In terms of biological role, transcriptional repressor which binds to the consensus sequence 5'-GGTGTG-3'. Regulates the circadian expression of genes involved in lipogenesis, gluconeogenesis, and glycolysis in the liver. Represses the expression of PCK2, a rate-limiting step enzyme of gluconeogenesis. May play a role in the cell cycle regulation. Plays a role in the regulation of the circadian clock; binds to the GC box sequence in the promoter of the core clock component ARTNL/BMAL1 and represses its transcriptional activity. The protein is Krueppel-like factor 10 (Klf10) of Rattus norvegicus (Rat).